Reading from the N-terminus, the 75-residue chain is Pi-hexatoxin-Hi1d (75 aa).

Cystine bridges form between C3-C18, C10-C23, C17-C33, C40-C55, C47-C60, and C54-C71. 2 Domain repeats span residues 3-33 (CIRKWLSCVDRKNDCCEGLECYKRRHSFEVC) and 40-71 (CLVKWKQCDGRERDCCAGLECWKRSGNKSSVC). The 2 X approximate repeats with cysteine pattern C-C-CC-C-C stretch occupies residues 3–71 (CIRKWLSCVD…KRSGNKSSVC (69 aa)).

It belongs to the psalmotoxin-1 family. Double-knot toxin subfamily. In terms of tissue distribution, expressed by the venom gland.

The protein localises to the secreted. Functionally, this toxin potently and selectively inhibits ASIC1a, an isoform of the gene ASIC1. It incompletely inhibits ASIC1a activation in a pH-independent and slowly reversible manner. This toxin acts by binding to and stabilizing the closed state of the channel, thereby impeding the transition into a conducting state. This toxin may bind to the acidic pocket of ASIC1a, since mutation of a key residue of this pocket (Arg-350) abolishes the ability of the toxin to inhibit ASIC1a. In vivo, this toxin protects the brain from neuronal injury when administered up to 8 hours after stroke onset. In Hadronyche infensa (Fraser island funnel-web spider), this protein is Pi-hexatoxin-Hi1d.